A 348-amino-acid polypeptide reads, in one-letter code: Alcohol dehydrogenase 2 (348 aa).

N-acetylserine is present on Ser-2. Residue Cys-44 coordinates Zn(2+). Residues His-45, Thr-46, and His-49 each contribute to the NAD(+) site. Residues His-67, Glu-68, Cys-98, Cys-101, Cys-104, Cys-112, and Cys-154 each coordinate Zn(2+). The NAD(+) site is built by Gly-181, Gly-182, Leu-183, Asp-202, and Lys-207. Position 213 is a phosphoserine (Ser-213). Phe-222 contributes to the NAD(+) binding site. The residue at position 223 (Thr-223) is a Phosphothreonine. Residues Lys-226 and Lys-234 each participate in a glycyl lysine isopeptide (Lys-Gly) (interchain with G-Cter in ubiquitin) cross-link. Position 269 (Val-269) interacts with NAD(+). Phosphoserine is present on Ser-279. Lys-287 participates in a covalent cross-link: Glycyl lysine isopeptide (Lys-Gly) (interchain with G-Cter in ubiquitin). The NAD(+) site is built by Ser-294 and Val-296. The residue at position 316 (Ser-316) is a Phosphoserine. A Glycyl lysine isopeptide (Lys-Gly) (interchain with G-Cter in ubiquitin) cross-link involves residue Lys-319. Arg-341 lines the NAD(+) pocket.

Belongs to the zinc-containing alcohol dehydrogenase family. As to quaternary structure, homotetramer. It depends on Zn(2+) as a cofactor.

Its subcellular location is the cytoplasm. The enzyme catalyses a primary alcohol + NAD(+) = an aldehyde + NADH + H(+). The catalysed reaction is a secondary alcohol + NAD(+) = a ketone + NADH + H(+). It carries out the reaction ethanol + NAD(+) = acetaldehyde + NADH + H(+). It catalyses the reaction butan-1-ol + NAD(+) = butanal + NADH + H(+). The enzyme catalyses hexan-1-ol + NAD(+) = hexanal + NADH + H(+). Preferentially oxidative, glucose-repressed isozyme that catalyzes the conversion of ethanol to acetaldehyde. Main enzyme involved in ethanol consumption. Acts on a variety of primary unbranched aliphatic alcohols. Also produces ethanol from glucose, albeit less than ADH1. This is Alcohol dehydrogenase 2 (ADH2) from Saccharomyces cerevisiae (strain ATCC 204508 / S288c) (Baker's yeast).